We begin with the raw amino-acid sequence, 404 residues long: F-box only protein 12 (404 aa).

The F-box domain occupies 1–44 (MKNSIPIDLIYEILSRLPAKSVARCRCVSKRWRSILRHQVFTEL). A helical membrane pass occupies residues 383–403 (LAILFCLFFLLFNYLIRLCWV).

The protein localises to the membrane. The sequence is that of F-box only protein 12 (FBX12) from Arabidopsis thaliana (Mouse-ear cress).